A 194-amino-acid polypeptide reads, in one-letter code: Probable nicotinate-nucleotide adenylyltransferase (194 aa).

Belongs to the NadD family.

It catalyses the reaction nicotinate beta-D-ribonucleotide + ATP + H(+) = deamido-NAD(+) + diphosphate. Its pathway is cofactor biosynthesis; NAD(+) biosynthesis; deamido-NAD(+) from nicotinate D-ribonucleotide: step 1/1. Catalyzes the reversible adenylation of nicotinate mononucleotide (NaMN) to nicotinic acid adenine dinucleotide (NaAD). The protein is Probable nicotinate-nucleotide adenylyltransferase of Brucella suis biovar 1 (strain 1330).